Here is a 481-residue protein sequence, read N- to C-terminus: Serine/threonine-protein kinase US3 (481 aa).

The tract at residues 12–63 (GQGRRKEEAVPPETKPSRVFPHGPFYTPAEDACLDSPPPETPKPSHTTPPSE) is disordered. The Protein kinase domain maps to 191–478 (FTIHGALTPG…AAELLCLPLF (288 aa)). ATP-binding positions include 197–205 (LTPGSEGCV) and Lys-220. Asp-305 acts as the Proton acceptor in catalysis.

Belongs to the protein kinase superfamily. Ser/Thr protein kinase family. Interacts with host LAT; this interaction prevents LAT activation of TRAF6. Phosphorylated by UL13; this phosphorylation regulates subsequent phosphorylation of UL31 and UL34 by US3. Autophosphorylated.

It localises to the host cytoplasm. The protein localises to the host nucleus. It catalyses the reaction L-seryl-[protein] + ATP = O-phospho-L-seryl-[protein] + ADP + H(+). The enzyme catalyses L-threonyl-[protein] + ATP = O-phospho-L-threonyl-[protein] + ADP + H(+). In terms of biological role, multifunctional serine/threonine kinase that plays a role in several processes including egress of virus particles from the nucleus, modulation of the actin cytoskeleton and inhibition of host immune response. Phosphorylates UL31 and UL34, two critical regulators of capsid budding from nucleus to endoplasmic reticulum, thereby facilitating virion egress. Modulates and redistributes host components of the nuclear envelope, including LMNA, emerin/EMD and the nuclear matrix protein MATR3. In turn, facilitates nuclear pore impairment and capsid release through impaired nuclear envelope. Phosphorylates envelope glycoprotein B (gB), probably to direct it to the cell surface. Promotes virus intracellular spread by restructuring host cell cytoskeleton. Blocks host apoptosis to extend cell survival and allow efficient viral replication. Promotes viral gene expression by phosphorylating host HDAC2 to reduce viral genome silencing. Strongly inhibits TCR-activated signal transduction in T-cells by reducing the ubiquitination of LAT and TRAF6, leading to a suboptimal activation of LAT. Subverts host antiviral innate immunity by inhibiting type I interferon production through hyperphosphorylation of beta-catenin/CTNNB1. In addition, phosphorylates the RNA sensor RIGI and the transcription factor IRF3 to prevent the RLR-mediated antiviral signaling pathway. Hyperphosphorylates host RELA and thereby dampens NF-kappa-B signaling. Acts as an immunoevasin partly responsible for inhibition of MR1 expression and antigen presentation in response to bacterial infection. This chain is Serine/threonine-protein kinase US3 (US3), found in Human herpesvirus 1 (strain 17) (HHV-1).